A 679-amino-acid polypeptide reads, in one-letter code: MSKNLLIELGLEELPAYVVTPSEKQLGERLATFLTENRLSFEDIQTFSTPRRLAVRVSGLADQQTDLTEDFKGPAKKIALDADGNFSKAAQGFVRGKGLTTDAIEFREVKGEEYVYVTKHEAGKPAKEVLLGVTEVLSAMTFPVSMHWANNSFEYIRPVHTLTVLLNDEALELDFLDIHSGRVSRGHRFLGTETTITSADSYEADLRSQFVIADAKERQEMIVEQIKTLEVEQGVQVDIDEDLLNEVLNLVEFPTAFMGSFEAKYLDVPEEVLVTSMKNHQRYFVVRDQAGHLMPNFVSVRNGNDQAIENVIKGNEKVLVARLEDGEFFWREDQKLQIADLVAKLTNVTFHEKIGSLAEHMDRTRVIAASLAKEANLSAEEVTAVDRAAQIYKFDLLTGMVGEFDELQGIMGEKYALLAGEDAAVATAIREHYLPDAAGGALPETKVGAVLALADKLDTLLSFFSVGLIPSGSNDPYALRRATQGIVRILDHFGWRIPMDKLVDSLYDLSFDSLTYANKADVMNFIRARVDKMMGKAAPKDIREAVLESSTFVVPEMLAAAEALVKASHTENYKPAVESLSRAFNLAEKADASVQVDPSLFENEQENTLFAAIQGLTLAGSAAQQLEQVFALSPVINDFFDNTMVMAEDQALKNNRLAILSDLVSKAKTIAAFNQLNTK.

Belongs to the class-II aminoacyl-tRNA synthetase family. As to quaternary structure, tetramer of two alpha and two beta subunits.

The protein resides in the cytoplasm. It carries out the reaction tRNA(Gly) + glycine + ATP = glycyl-tRNA(Gly) + AMP + diphosphate. This is Glycine--tRNA ligase beta subunit from Streptococcus pyogenes serotype M18 (strain MGAS8232).